Consider the following 380-residue polypeptide: tRNA-specific 2-thiouridylase MnmA (380 aa).

ATP is bound by residues 9–16 (GVSGGVDS) and methionine 35. The tract at residues 94–96 (NPD) is interaction with target base in tRNA. Cysteine 99 (nucleophile) is an active-site residue. A disulfide bridge links cysteine 99 with cysteine 195. Glycine 123 contributes to the ATP binding site. An interaction with tRNA region spans residues 145–147 (KDQ). Cysteine 195 functions as the Cysteine persulfide intermediate in the catalytic mechanism. Residues 308 to 309 (RY) are interaction with tRNA.

This sequence belongs to the MnmA/TRMU family.

The protein localises to the cytoplasm. It catalyses the reaction S-sulfanyl-L-cysteinyl-[protein] + uridine(34) in tRNA + AH2 + ATP = 2-thiouridine(34) in tRNA + L-cysteinyl-[protein] + A + AMP + diphosphate + H(+). Functionally, catalyzes the 2-thiolation of uridine at the wobble position (U34) of tRNA, leading to the formation of s(2)U34. The polypeptide is tRNA-specific 2-thiouridylase MnmA (Stenotrophomonas maltophilia (strain K279a)).